Here is a 269-residue protein sequence, read N- to C-terminus: Formamidopyrimidine-DNA glycosylase (269 aa).

Catalysis depends on proline 2, which acts as the Schiff-base intermediate with DNA. The active-site Proton donor is glutamate 3. Lysine 58 (proton donor; for beta-elimination activity) is an active-site residue. Residues histidine 91, arginine 110, and lysine 150 each contribute to the DNA site. An FPG-type zinc finger spans residues 235–269 (SVYGCENKTCHFCKSKIIKIVQNQRSTFYCRKCQT). Catalysis depends on arginine 259, which acts as the Proton donor; for delta-elimination activity.

It belongs to the FPG family. In terms of assembly, monomer. Zn(2+) serves as cofactor.

It carries out the reaction Hydrolysis of DNA containing ring-opened 7-methylguanine residues, releasing 2,6-diamino-4-hydroxy-5-(N-methyl)formamidopyrimidine.. The enzyme catalyses 2'-deoxyribonucleotide-(2'-deoxyribose 5'-phosphate)-2'-deoxyribonucleotide-DNA = a 3'-end 2'-deoxyribonucleotide-(2,3-dehydro-2,3-deoxyribose 5'-phosphate)-DNA + a 5'-end 5'-phospho-2'-deoxyribonucleoside-DNA + H(+). Functionally, involved in base excision repair of DNA damaged by oxidation or by mutagenic agents. Acts as a DNA glycosylase that recognizes and removes damaged bases. Has a preference for oxidized purines, such as 7,8-dihydro-8-oxoguanine (8-oxoG). Has AP (apurinic/apyrimidinic) lyase activity and introduces nicks in the DNA strand. Cleaves the DNA backbone by beta-delta elimination to generate a single-strand break at the site of the removed base with both 3'- and 5'-phosphates. In Ruthia magnifica subsp. Calyptogena magnifica, this protein is Formamidopyrimidine-DNA glycosylase.